A 217-amino-acid polypeptide reads, in one-letter code: Probable transaldolase (217 aa).

Lys-85 (schiff-base intermediate with substrate) is an active-site residue.

The protein belongs to the transaldolase family. Type 3B subfamily.

It is found in the cytoplasm. The catalysed reaction is D-sedoheptulose 7-phosphate + D-glyceraldehyde 3-phosphate = D-erythrose 4-phosphate + beta-D-fructose 6-phosphate. Its pathway is carbohydrate degradation; pentose phosphate pathway; D-glyceraldehyde 3-phosphate and beta-D-fructose 6-phosphate from D-ribose 5-phosphate and D-xylulose 5-phosphate (non-oxidative stage): step 2/3. Its function is as follows. Transaldolase is important for the balance of metabolites in the pentose-phosphate pathway. This is Probable transaldolase from Lachnoclostridium phytofermentans (strain ATCC 700394 / DSM 18823 / ISDg) (Clostridium phytofermentans).